The primary structure comprises 211 residues: Ethylene-responsive transcription factor LEP (211 aa).

Disordered regions lie at residues 1–21 and 74–110; these read MNTT…TRFL and NFVY…NDPV. Residues 19–76 constitute a DNA-binding region (AP2/ERF); it reads RFLGVRRRPWGRYAAEIRDPTTKERHWLGTFDTAEEAALAYDRAARSMRGTRARTNFV. The span at 81–92 shows a compositional bias: low complexity; that stretch reads PPSSSVTSIVSP. The segment covering 93–107 has biased composition (pro residues); the sequence is DDPPPPPPPPAPPSN.

It belongs to the AP2/ERF transcription factor family. ERF subfamily. As to expression, expressed in germinating seeds. Present in young shoots, at low levels, especially in leaf primordia and developing leaf blades. Also detected in vascular tissue, mostly in xylem, of young leaves, petioles and hypocotyls.

The protein resides in the nucleus. Cell division-promoting factor involved in leaf blade differentiation, inflorescence branching, as well as in carpel and silique shape. Promotes the number of xylem cells. Positively regulates the gibberellin signaling pathway leading to germination, hypocotyl elongation, and leaf expansion. Probably acts as a transcriptional activator. Binds to the GCC-box pathogenesis-related promoter element. May be involved in the regulation of gene expression by stress factors and by components of stress signal transduction pathways. This chain is Ethylene-responsive transcription factor LEP (LEP), found in Arabidopsis thaliana (Mouse-ear cress).